We begin with the raw amino-acid sequence, 402 residues long: Tryptophan--tRNA ligase, cytoplasmic (402 aa).

The 'HIGH' region signature appears at 97–106 (PSSEALHLGH). Positions 280–284 (KMSAS) match the 'KMSKS' region motif.

The protein belongs to the class-I aminoacyl-tRNA synthetase family.

It is found in the cytoplasm. The protein resides in the cytosol. It carries out the reaction tRNA(Trp) + L-tryptophan + ATP = L-tryptophyl-tRNA(Trp) + AMP + diphosphate + H(+). The protein is Tryptophan--tRNA ligase, cytoplasmic of Arabidopsis thaliana (Mouse-ear cress).